The chain runs to 903 residues: MSNFRLILETEGGKRVLCESIVLHFAFMFQTEIVPVCNDEFTLSSCVPTLDFDVDVLSAAYGDGLEISSPGLRCCIAWPPMYALTLGEFYHFHTHRWVSAYDWSSLLDTDEFLSAIGYAHPIYRDPNPDYDPYVMHSSTGKTIAVDTVTEKVYIIAESLVQFFNIGLRQFPPFAEAELDPEQEKMWFGETKCGREEFILLQRNLPAMKDYVAKHCGKRIRVDAFQDFDFSFCSLSDIYYLTGPGILEKITEKDYAIIGTCARSQAEPNCRAAIVMGSNCHIYIYVENRISKVSKSLRTFIRRGFDELLYKEKYSLDWNDDTLFYISDTETENLNRMLNGELPVLRSKPRHMCVRKDRLVKDRSKILFAVRLDEEDSLTVKFITKFLTPVFVGRLPATSRFVVPVSCARLTNGLQGTAAARFGIKGLHPSSDCVVWNRLIDYEYETYKYPSTYVRADQIADMVKNLKFMDNFDEKWQCITKLAFIGLYAGASLFNFASKPTLGYWCRYLCEYASMLLFQFESKLKELTKESTRQLGGYNLCHWGQELKDCLENKSDVFFRYDFFERIESCLIEHFMLLCGCVECRRMFIMYNKRGRKCDFGHCVRIQCFPMIGSIRLPAFLHLGEPYSVSLSSLIAKDLGLSMIEGQIEHSRLPISLQISVTPDKKALLTFLTNIVFIVFVVNTLYRVINAELDIYYDLFTEEVGKLCVTMEEEMKLGRNGCLGDLCYFSSMKQMKEIVRCPGEKSQFILKCWEALRIGFSVPAYKDYDETRFMEMFFLHHLHIKRFHEHNDRDLVSSDNLIPGFFIVNTHEENFLQRLQRVVLPVAEDYLTNTRCINGTMAFFFSGLKYFGSGNHRGVQISPEKDVRAIGYKLGSLDVLRDDYKYYEYAPDCAGELNGHDGDE.

Residues 665-685 form a helical membrane-spanning segment; the sequence is KALLTFLTNIVFIVFVVNTLY.

Belongs to the herpesviridae US22 family.

It localises to the host membrane. The chain is Protein U7 (U7) from Human herpesvirus 6B (strain Z29) (HHV-6 variant B).